The sequence spans 193 residues: Thymidine kinase (193 aa).

ATP-binding positions include Gly16–Ser23 and Asp89–Gln92. Glu90 acts as the Proton acceptor in catalysis. Residues Cys146, Cys149, Cys184, and Cys187 each contribute to the Zn(2+) site.

The protein belongs to the thymidine kinase family. As to quaternary structure, homotetramer.

It is found in the cytoplasm. The catalysed reaction is thymidine + ATP = dTMP + ADP + H(+). This chain is Thymidine kinase, found in Caldanaerobacter subterraneus subsp. tengcongensis (strain DSM 15242 / JCM 11007 / NBRC 100824 / MB4) (Thermoanaerobacter tengcongensis).